Consider the following 471-residue polypeptide: Cysteine--tRNA ligase (471 aa).

A Zn(2+)-binding site is contributed by Cys-29. Residues 31-41 carry the 'HIGH' region motif; the sequence is PTVYNYIHIGN. Positions 209, 234, and 238 each coordinate Zn(2+). The short motif at 266–270 is the 'KMSKS' region element; it reads KMSKS. Lys-269 provides a ligand contact to ATP.

Belongs to the class-I aminoacyl-tRNA synthetase family. Monomer. The cofactor is Zn(2+).

Its subcellular location is the cytoplasm. It carries out the reaction tRNA(Cys) + L-cysteine + ATP = L-cysteinyl-tRNA(Cys) + AMP + diphosphate. The sequence is that of Cysteine--tRNA ligase from Listeria monocytogenes serotype 4b (strain CLIP80459).